The chain runs to 102 residues: Small ribosomal subunit protein uS10 (102 aa).

This sequence belongs to the universal ribosomal protein uS10 family. In terms of assembly, part of the 30S ribosomal subunit.

Functionally, involved in the binding of tRNA to the ribosomes. The polypeptide is Small ribosomal subunit protein uS10 (Lactobacillus helveticus (strain DPC 4571)).